The following is a 138-amino-acid chain: ATP synthase epsilon chain (138 aa).

This sequence belongs to the ATPase epsilon chain family. As to quaternary structure, F-type ATPases have 2 components, CF(1) - the catalytic core - and CF(0) - the membrane proton channel. CF(1) has five subunits: alpha(3), beta(3), gamma(1), delta(1), epsilon(1). CF(0) has three main subunits: a, b and c.

It is found in the cell inner membrane. In terms of biological role, produces ATP from ADP in the presence of a proton gradient across the membrane. The sequence is that of ATP synthase epsilon chain from Vesicomyosocius okutanii subsp. Calyptogena okutanii (strain HA).